We begin with the raw amino-acid sequence, 381 residues long: tRNA pseudouridine synthase D (381 aa).

Asp81 serves as the catalytic Nucleophile. The region spanning 160–335 (GMPNYFGSQR…TLGSRRFFWV (176 aa)) is the TRUD domain.

The protein belongs to the pseudouridine synthase TruD family.

It catalyses the reaction uridine(13) in tRNA = pseudouridine(13) in tRNA. Functionally, responsible for synthesis of pseudouridine from uracil-13 in transfer RNAs. The polypeptide is tRNA pseudouridine synthase D (Helicobacter pylori (strain ATCC 700392 / 26695) (Campylobacter pylori)).